The sequence spans 268 residues: Phosphatidylcholine synthase (268 aa).

At Met1–Arg27 the chain is on the cytoplasmic side. The chain crosses the membrane as a helical span at residues Ala28 to Ala48. Over Ala49–Arg53 the chain is Periplasmic. A helical transmembrane segment spans residues Trp54–Ile74. The Cytoplasmic segment spans residues Ala75–Ser88. The chain crosses the membrane as a helical span at residues Gly89–Leu109. The Periplasmic portion of the chain corresponds to Tyr110–Arg112. Residues Gly113–Ile133 form a helical membrane-spanning segment. At Tyr134–Asn145 the chain is on the cytoplasmic side. The helical transmembrane segment at Phe146–Pro166 threads the bilayer. The Periplasmic portion of the chain corresponds to Gly167–Gln168. The chain crosses the membrane as a helical span at residues Trp169–Ile189. The Cytoplasmic segment spans residues His190 to Thr203. Residues Met204 to Phe224 traverse the membrane as a helical segment. The Periplasmic portion of the chain corresponds to Tyr225 to Lys240. A helical transmembrane segment spans residues Ile241–Pro261. Residues Asn262 to Ala268 lie on the Cytoplasmic side of the membrane.

Belongs to the CDP-alcohol phosphatidyltransferase class-I family. Requires Mn(2+) as cofactor.

The protein localises to the cell inner membrane. The catalysed reaction is a CDP-1,2-diacyl-sn-glycerol + choline = a 1,2-diacyl-sn-glycero-3-phosphocholine + CMP + H(+). Condenses choline with CDP-diglyceride to produce phosphatidylcholine and CMP. The polypeptide is Phosphatidylcholine synthase (pcs) (Mesorhizobium japonicum (strain LMG 29417 / CECT 9101 / MAFF 303099) (Mesorhizobium loti (strain MAFF 303099))).